A 381-amino-acid chain; its full sequence is Succinyl-diaminopimelate desuccinylase (381 aa).

Zn(2+) is bound at residue His-68. Asp-70 is a catalytic residue. Asp-101 lines the Zn(2+) pocket. The Proton acceptor role is filled by Glu-135. Residues Glu-136, Glu-164, and His-350 each coordinate Zn(2+).

This sequence belongs to the peptidase M20A family. DapE subfamily. As to quaternary structure, homodimer. Requires Zn(2+) as cofactor. Co(2+) is required as a cofactor.

It carries out the reaction N-succinyl-(2S,6S)-2,6-diaminopimelate + H2O = (2S,6S)-2,6-diaminopimelate + succinate. The protein operates within amino-acid biosynthesis; L-lysine biosynthesis via DAP pathway; LL-2,6-diaminopimelate from (S)-tetrahydrodipicolinate (succinylase route): step 3/3. Catalyzes the hydrolysis of N-succinyl-L,L-diaminopimelic acid (SDAP), forming succinate and LL-2,6-diaminopimelate (DAP), an intermediate involved in the bacterial biosynthesis of lysine and meso-diaminopimelic acid, an essential component of bacterial cell walls. The sequence is that of Succinyl-diaminopimelate desuccinylase from Neisseria gonorrhoeae (strain ATCC 700825 / FA 1090).